A 1659-amino-acid polypeptide reads, in one-letter code: MMAQFPTAMNGGPNMWAITSEERTKHDKQFDNLKPSGGYITGDQARTFFLQSGLPAPVLAEIWALSDLNKDGKMDQQEFSIAMKLIKLKLQGQQLPVVLPPIMKQPPMFSPLISARFGMGSMPNLSIHQPLPPVAPIATPLSSATSGTSIPPLMMPAPLVPSVSTSSLPNGTASLIQPLSIPYSSSTLPHASSYSLMMGGFGGASIQKAQSLIDLGSSSSTSSTASLSGNSPKTGTSEWAVPQPSRLKYRQKFNSLDKGMSGYLSGFQARNALLQSNLSQTQLATIWTLADIDGDGQLKAEEFILAMHLTDMAKAGQPLPLTLPPELVPPSFRGGKQVDSVNGTLPSYQKTQEEEPQKKLPVTFEDKRKANYERGNMELEKRRQVLMEQQQREAERKAQKEKEEWERKQRELQEQEWKKQLELEKRLEKQRELERQREEERRKEIERREAAKQELERQRRLEWERLRRQELLSQKTREQEDIVRLSSRKKSLHLELEAVNGKHQQISGRLQDVQIRKQTQKTELEVLDKQCDLEIMEIKQLQQELKEYQNKLIYLVPEKQLLNERIKNMQLSNTPDSGISLLHKKSSEKEELCQRLKEQLDALEKETASKLSEMDSFNNQLKELRESYNTQQLALEQLHKIKRDKLKEIERKRLEQIQKKKLEDEAARKAKQGKENLWRESIRKEEEEKQKRLQEEKSQDKTQEEERKAEAKQSETASALVNYRALYPFEARNHDEMSFSSGDIIQVDEKTVGEPGWLYGSFQGKFGWFPCNYVEKVLSSEKALSPKKALLPPTVSLSATSTSSQPPASVTDYHNVSFSNLTVNTTWQQKSAFTRTVSPGSVSPIHGQGQAVENLKAQALCSWTAKKENHLNFSKHDVITVLEQQENWWFGEVHGGRGWFPKSYVKLIPGNEVQRGEPEALYAAVTKKPTSTAYPVTSTAYPVGEDYIALYSYSSVEPGDLTFTEGEEILVTQKDGEWWTGSIGERTGIFPSNYVRPKDQENFGNASKSGASNKKPEIAQVTSAYAASGTEQLSLAPGQLILILKKNTSGWWQGELQARGKKRQKGWFPASHVKLLGPSSERTMPTFHAVCQVIAMYDYMANNEDELNFSKGQLINVMNKDDPDWWQGETNGLTGLFPSNYVKMTTDSDPSQQWCADLQALDTMQPTERKRQGYIHELIQTEERYMDDDLQLVIEVFQKRMAEEGFLTEADMALIFVNWKELIMSNTKLLRALRVRKKTGGEKMPVQMIGDILAAELSHMQAYIRFCSCQLNGATLLQQKTDEDTDFKEFLKKLASDPRCKGMPLSSFLLKPMQRITRYPLLIRSILENTPQSHVDHSSLKLALERAEELCSQVNEGVREKENSDRLEWIQAHVQCEGLAEQLIFNSLTNCLGPRKLLHSGKLYKTKSNKELHAFLFNDFLLLTYLVRQFAAASGHEKLFNSKSSAQFRMYKTPIFLNEVLVKLPTDPSGDEPVFHISHIDRVYTLRTDNINERTAWVQKIKGASEQYIDTEKKKREKAYQARSQKTSGIGRLMVHVIEATELKACKPNGKSNPYCEVSMGSQSYTTRTLQDTLNPKWNFNCQFFIKDLYQDVLCLTMFDRDQFSPDDFLGRTEVPVAKIRTEQESKGPTTRRLLLHEVPTGEVWVRFDLQLFEQKTLL.

In terms of domain architecture, EH 1 spans 22 to 110 (ERTKHDKQFD…PIMKQPPMFS (89 aa)). An EF-hand 1 domain is found at 54–89 (LPAPVLAEIWALSDLNKDGKMDQQEFSIAMKLIKLK). Aspartate 67, asparagine 69, aspartate 71, lysine 73, and glutamate 78 together coordinate Ca(2+). A phosphoserine mark is found at serine 110, serine 211, and serine 231. The segment covering 220–231 (STSSTASLSGNS) has biased composition (low complexity). Positions 220–242 (STSSTASLSGNSPKTGTSEWAVP) are disordered. Residues 245–334 (SRLKYRQKFN…PELVPPSFRG (90 aa)) enclose the EH 2 domain. In terms of domain architecture, EF-hand 2 spans 278–313 (LSQTQLATIWTLADIDGDGQLKAEEFILAMHLTDMA). Positions 335–382 (GKQVDSVNGTLPSYQKTQEEEPQKKLPVTFEDKRKANYERGNMELEKR) are disordered. Residues 339 to 350 (DSVNGTLPSYQK) are compositionally biased toward polar residues. Residues 351-382 (TQEEEPQKKLPVTFEDKRKANYERGNMELEKR) are compositionally biased toward basic and acidic residues. A coiled-coil region spans residues 365–717 (EDKRKANYER…KAEAKQSETA (353 aa)). Position 554 is a phosphotyrosine (tyrosine 554). Position 574 is a phosphothreonine (threonine 574). Residues 689-713 (KQKRLQEEKSQDKTQEEERKAEAKQ) are compositionally biased toward basic and acidic residues. The disordered stretch occupies residues 689–715 (KQKRLQEEKSQDKTQEEERKAEAKQSE). The SH3 1 domain occupies 718-779 (SALVNYRALY…PCNYVEKVLS (62 aa)). Threonine 836 carries the post-translational modification Phosphothreonine. A phosphoserine mark is found at serine 838 and serine 843. The SH3 2 domain occupies 852–910 (VENLKAQALCSWTAKKENHLNFSKHDVITVLEQQENWWFGEVHGGRGWFPKSYVKLIPG). Tyrosine 922 is subject to Phosphotyrosine. SH3 domains follow at residues 942–1000 (PVGE…PKDQ), 1014–1078 (KKPE…LLGP), and 1088–1147 (HAVC…MTTD). The DH domain occupies 1170-1357 (KRQGYIHELI…EELCSQVNEG (188 aa)). The 111-residue stretch at 1396 to 1506 (KLLHSGKLYK…WVQKIKGASE (111 aa)) folds into the PH domain. Positions 1514 to 1630 (KKREKAYQAR…RTEQESKGPT (117 aa)) constitute a C2 domain. Positions 1602, 1605, and 1608 each coordinate Ca(2+).

Belongs to a complex that may contain multimers of ITSN1, ITSN2 and EPS15, and different partners according to the step in the endocytic process. Interacts with ADAM15. Interacts with FASLG. Interacts with ANKRD54. Interacts with FCHO2. It depends on Ca(2+) as a cofactor. As to expression, widely expressed in adult tissues.

Its subcellular location is the cytoplasm. Its function is as follows. Adapter protein that may provide indirect link between the endocytic membrane traffic and the actin assembly machinery. May regulate the formation of clathrin-coated vesicles (CCPs). Seems to be involved in CCPs maturation including invagination or budding. Involved in endocytosis of integrin beta-1 (ITGB1) and transferrin receptor (TFR). Plays a role in dendrite formation by melanocytes. The sequence is that of Intersectin-2 (Itsn2) from Mus musculus (Mouse).